Reading from the N-terminus, the 441-residue chain is MQVSLNPEWLARNNDEHKIRRNDHRSPFQRDRARILHSAAFRRLQAKTQVHGTSLNDFHRTRLTHSLEAAQIGTGIVAQIKLKQPEFRELLPSDSLIDSLCLAHDIGHPPYGHGGEIALNYMMRDHGGFEGNAQTFRIVTSLEPYTEHHGMNLSRRTLLGLLKYPALLSATRAAIPPPAVAHQRQLKAKDWSPAKGIYDCDLASLDWVLEPLCESDRELLGQMRAEPSSPKEHRKTRFKSLDCSIMELADDIAYGVHDLEDAIVLGMVTRAQWQEAAAAQLAECGDPWFEEHIAELSEMLFSGKHYVRKDAIGGIVNALLTSISVKPVEAPFHNELLAFNAYIEPHMGNALEVLKHFVSQYVIQIPQVQRFEYKGQQLIMDLFEALSADPERLLPQATGEKWRKAQEQDEGMRVICDYIAAMTDAYAQRLHQQLFSAQSHY.

One can recognise an HD domain in the interval 62–255 (RLTHSLEAAQ…MELADDIAYG (194 aa)).

The protein belongs to the dGTPase family. Type 2 subfamily.

This chain is Deoxyguanosinetriphosphate triphosphohydrolase-like protein 1, found in Vibrio cholerae serotype O1 (strain ATCC 39315 / El Tor Inaba N16961).